Consider the following 352-residue polypeptide: Fc receptor-like A (352 aa).

The N-terminal stretch at 1–30 (MKLSCTLTQWALYVCPAVLLATQMLLAASS) is a signal peptide. Residues 46 to 65 (CQAAAEEDEGDEDDGDMTQS) form a disordered region. Residues 50–61 (AEEDEGDEDDGD) show a composition bias toward acidic residues. 2 Ig-like C2-type domains span residues 80–169 (PFHL…EAAS) and 182–260 (PVLK…RQIS). Disulfide bonds link cysteine 109–cysteine 153 and cysteine 202–cysteine 250. The disordered stretch occupies residues 275 to 310 (KPTASETPPTEALGPLPPPPASSAEQPRFSSPDPHL).

As to quaternary structure, monomer or homodimer; disulfide-linked. In terms of tissue distribution, highly expressed in spleen. Expressed in immature B-cell and B-cell lines.

Its subcellular location is the cytoplasm. May be implicated in B-cell differentiation and lymphomagenesis. The chain is Fc receptor-like A (Fcrla) from Mus musculus (Mouse).